The sequence spans 102 residues: Small ribosomal subunit protein uS10 (102 aa).

The protein belongs to the universal ribosomal protein uS10 family. As to quaternary structure, part of the 30S ribosomal subunit.

In terms of biological role, involved in the binding of tRNA to the ribosomes. The chain is Small ribosomal subunit protein uS10 from Lactococcus lactis subsp. lactis (strain IL1403) (Streptococcus lactis).